The chain runs to 280 residues: UBX domain-containing protein 10 (280 aa).

Positions 41-94 (SAKGRTRPSLQKSQGVEVCAHHIPSPPPAIPYELPSSQKPGACAPKSPNQGASD) are disordered. Serine 87 carries the phosphoserine modification. A UBX domain is found at 194 to 271 (DQEPRLLLAV…RIPHKSVLGI (78 aa)).

It belongs to the UBXN10 family. As to quaternary structure, interacts with CLUAP1; the interaction is direct and mediates interaction with the intraflagellar transport complex B (IFT-B). Interacts with VCP; the interaction is direct.

The protein resides in the cell projection. It localises to the cilium. VCP/p97-binding protein required for ciliogenesis. Acts as a tethering factor that facilitates recruitment of VCP/p97 to the intraflagellar transport complex B (IFT-B) in cilia. UBX domain-containing proteins act as tethering factors for VCP/p97 and may specify substrate specificity of VCP/p97. The chain is UBX domain-containing protein 10 from Homo sapiens (Human).